We begin with the raw amino-acid sequence, 183 residues long: uncharacterized protein (183 aa).

4 helical membrane passes run 26 to 48, 72 to 91, 104 to 121, and 125 to 147; these read FVAI…IIFY, LLVR…KVFI, IIEA…LIVF, and FTFW…YVLL.

Its subcellular location is the cell membrane. This is an uncharacterized protein from Aquifex aeolicus (strain VF5).